A 172-amino-acid chain; its full sequence is Thioredoxin M-type, chloroplastic (172 aa).

The N-terminal 60 residues, Met-1 to Leu-60, are a transit peptide targeting the chloroplast. Residues His-61–Ile-172 form the Thioredoxin domain. Catalysis depends on nucleophile residues Cys-97 and Cys-100. An intrachain disulfide couples Cys-97 to Cys-100.

This sequence belongs to the thioredoxin family. Plant M-type subfamily. Forms a complex with heterodimeric ferredoxin-thioredoxin reductase (FTR) and ferredoxin.

Its subcellular location is the plastid. It localises to the chloroplast. Participates in various redox reactions through the reversible oxidation of the active center dithiol to a disulfide. The M form is known to activate NADP-malate dehydrogenase. This Pisum sativum (Garden pea) protein is Thioredoxin M-type, chloroplastic.